A 133-amino-acid polypeptide reads, in one-letter code: Mitochondrial import inner membrane translocase subunit TIM17-3 (133 aa).

The next 4 helical transmembrane spans lie at 15-35 (IVNA…VYHF), 63-83 (GGTF…LVRI), 90-105 (WNSI…VLSI), and 115-128 (SAVM…VLNP).

This sequence belongs to the Tim17/Tim22/Tim23 family. Component of the TIM17:23 complex at least composed of TIM23, TIM17 and TIM50. The complex interacts with the TIM44 component of the PAM complex. In terms of tissue distribution, expressed in cotyledons, roots, flowers and leaves.

The protein localises to the mitochondrion inner membrane. In terms of biological role, essential component of the TIM17:23 complex, a complex that mediates the translocation of transit peptide-containing proteins across the mitochondrial inner membrane. Links the inner and outer membranes. This is Mitochondrial import inner membrane translocase subunit TIM17-3 (TIM17-3) from Arabidopsis thaliana (Mouse-ear cress).